We begin with the raw amino-acid sequence, 156 residues long: Large ribosomal subunit protein uL30 (156 aa).

Belongs to the universal ribosomal protein uL30 family. Part of the 50S ribosomal subunit.

The polypeptide is Large ribosomal subunit protein uL30 (Sulfolobus acidocaldarius (strain ATCC 33909 / DSM 639 / JCM 8929 / NBRC 15157 / NCIMB 11770)).